The following is a 335-amino-acid chain: Hsp90 co-chaperone Cdc37-like 1 (335 aa).

The span at methionine 1–tryptophan 11 shows a compositional bias: pro residues. Residues methionine 1–glycine 42 form a disordered region. Positions glutamate 2 to methionine 170 are self-association. The segment covering aspartate 27–aspartate 40 has biased composition (low complexity). 2 positions are modified to phosphoserine: serine 32 and serine 88. Positions histidine 84–arginine 120 form a coiled coil. Residues lysine 147–glutamine 276 are self-association and interaction with Hsp90. The interaction with Hsp70 stretch occupies residues lysine 266 to valine 335. The tract at residues serine 277 to valine 335 is required for interaction with STIP1.

This sequence belongs to the CDC37 family. Self-associates. Forms complexes with Hsp70 and Hsp90. Interacts with CDC37, FKBP4, PPID and STIP1.

The protein localises to the cytoplasm. Co-chaperone that binds to numerous proteins and promotes their interaction with Hsp70 and Hsp90. The polypeptide is Hsp90 co-chaperone Cdc37-like 1 (Cdc37l1) (Rattus norvegicus (Rat)).